The following is a 135-amino-acid chain: Glutaredoxin-C3 (135 aa).

In terms of domain architecture, Glutaredoxin spans 26–134; the sequence is VARVERLASE…PLLKEAGALW (109 aa). Cys-46 and Cys-49 are oxidised to a cystine. The Responsive for interaction with TGA factors motif lies at 132-135; that stretch reads ALWL.

Belongs to the glutaredoxin family. CC-type subfamily.

It is found in the cytoplasm. It localises to the nucleus. Its function is as follows. Has a glutathione-disulfide oxidoreductase activity in the presence of NADPH and glutathione reductase. Reduces low molecular weight disulfides and proteins. This chain is Glutaredoxin-C3 (GRXC3), found in Oryza sativa subsp. japonica (Rice).